The following is a 104-amino-acid chain: uncharacterized protein (104 aa).

A coiled-coil region spans residues 42–104 (ARDSFDQDFE…AREERHKLGR (63 aa)).

Belongs to the WXG100 family.

This is an uncharacterized protein from Bacillus subtilis (strain 168).